An 869-amino-acid chain; its full sequence is MSSIARPPDPCLVAIILIVRSRAGPRFVFHYPPNPLSENGLKPALRSRRTSRSRTGQGYKSNDSSSSEESGSSSDEDEDEHQHQLHSQSNNHSQTHLSGSVVSARRSSNFGLDDHVTMSVSPGGDSQRAGSIGSSRTLFRRRGGNSDVEEESGAGSDRQEDGAGTAGGPNRPPWESLLGLPADVWEKLLSPSPAWHKRRFEVGINDLAFIGWPVFVREDGTWRKQKRKKKKEKKKARAEWEGGELGHNENSEDAPDGEDGDGEGGGGLKLIVASTETLSPKHMTFSEAKRASVASNLAARASSDCLDVDDKDSMTMFNVVFVLDPPLLEYSMRIKELYDNIIKKFAKALKWEQARTDYVWREAQHITHLKEKAKERRTSLNTLYSELINQSSLARAIYTVFNSISASKIASVPLSPDVSISLQIPPLTSTPYLSGPADKAYPGLWLTTADSVTPVDDPTAEEIAAPHQVLAKNFALLLLDNEATILKDVEASGGALAPALAHYLRCSKPTKSFAQISATSGIPLSTIQMLASHLVYWRRARAIPPIHQRDTYIVSPNCDLSKLEVATAAYQAAFPTLPSLPKMLSALSGTPRPYGSFIPSKDHKETYFAILAWLLRGGWVTQLRSFARVKVTPEIKMAVEVALRREEVDKYLRKSRPSGPGKSGIDGEEGSGAEEVDDASSSSSSSLSSHGSGEETPMPGRYKLESEMRLEHSLLDRNTSLRTASLILFPHRASPLESRWLEEIVSQFPDKPRSANRLRGHGSGSRGGEGDPECAGICTPMKDLWPTYIKYFNGLDALEKIPIRESLKRKLAWQVLTRLGMVTSQQTSIELDPREQVLVSVRHWNNELIYFQFLIFPRDINSIIPHHAR.

A signal peptide spans Met-1–Ala-23. Disordered stretches follow at residues His-30–Glu-175, Trp-222–Gly-266, Leu-652–Gly-700, and Lys-751–Glu-773. 2 stretches are compositionally biased toward low complexity: residues Ser-61–Ser-73 and Leu-85–Ser-98. Polar residues predominate over residues Arg-128–Thr-137. Basic residues predominate over residues Arg-223–Ala-236. Over residues Arg-237–Asn-250 the composition is skewed to basic and acidic residues. Acidic residues-rich tracts occupy residues Ser-251–Gly-262 and Asp-666–Asp-678. Over residues Ser-680–Ser-689 the composition is skewed to low complexity.

Belongs to the NPR3 family.

In terms of biological role, mediates inactivation of the TORC1 complex in response to amino acid starvation. Required for meiotic nuclear division. The chain is Nitrogen permease regulator 3 (npr3) from Aspergillus clavatus (strain ATCC 1007 / CBS 513.65 / DSM 816 / NCTC 3887 / NRRL 1 / QM 1276 / 107).